The primary structure comprises 589 residues: Deoxynucleoside triphosphate triphosphohydrolase SAMHD1 (589 aa).

Met-1 is modified (N-acetylmethionine). The span at 1–10 (MQSADSQNTP) shows a compositional bias: polar residues. The tract at residues 1–41 (MQSADSQNTPKRPRRDGSPRTPPDSPLADAETSPSHDLDPD) is disordered. The residue at position 18 (Ser-18) is a Phosphoserine. At Thr-21 the chain carries Phosphothreonine. 2 positions are modified to phosphoserine: Ser-33 and Ser-88. In terms of domain architecture, SAM spans 45–100 (WGPEQVWSFLRRCGFSDSELLKRCREKRMSGSLLPFPEDLGISSHGKKMKLLNCIQ). GTP contacts are provided by Lys-104 and Val-105. A dGTP-binding site is contributed by Asn-107. GTP is bound by residues Asp-125, Gln-130, and Arg-133. Gln-137, Leu-138, Val-144, and Arg-152 together coordinate dGTP. Gln-137 contributes to the dATP binding site. DCTP is bound at residue Gln-137. DTTP is bound at residue Gln-137. Arg-152 lines the dATP pocket. Arg-152 serves as a coordination point for dCTP. Arg-152 contributes to the dTTP binding site. The HD domain maps to 152–277 (RFEHSLGVGY…IKDASKWLYK (126 aa)). Mn(2+) contacts are provided by His-155, His-194, and Asp-195. Residues His-198 and His-203 each contribute to the dATP site. DCTP contacts are provided by His-198 and His-203. DTTP-binding residues include His-198 and His-203. His-221 is a catalytic residue. Residue Asp-300 participates in Mn(2+) binding. Positions 301, 304, 308, 322, 341, 343, 347, 355, 363, 364, 365, and 366 each coordinate dGTP. Positions 301, 304, and 308 each coordinate dATP. Lys-301, Tyr-304, and Asp-308 together coordinate dCTP. 3 residues coordinate dTTP: Lys-301, Tyr-304, and Asp-308. Arg-355 is a dATP binding site. Residue Arg-355 participates in dCTP binding. Gln-364 is a binding site for dATP. A dCTP-binding site is contributed by Gln-364. Position 364 (Gln-364) interacts with dTTP. GTP is bound by residues Arg-440 and Lys-444. Lys-457 is covalently cross-linked (Glycyl lysine isopeptide (Lys-Gly) (interchain with G-Cter in SUMO2)). Lys-512 serves as a coordination point for GTP. Lys-512 is a binding site for dGTP.

This sequence belongs to the SAMHD1 family. As to quaternary structure, homodimer; in absence of GTP and dNTP. Homotetramer; in GTP- and dNTP-bound form. Interacts with MRE11; leading to stimulate the exonuclease activity of MRE11. Interacts with RBBP8/CtIP. Interacts (via its C-terminus) with CD81. Requires Zn(2+) as cofactor.

It is found in the nucleus. It localises to the chromosome. It catalyses the reaction a 2'-deoxyribonucleoside 5'-triphosphate + H2O = a 2'-deoxyribonucleoside + triphosphate + H(+). The catalysed reaction is dATP + H2O = 2'-deoxyadenosine + triphosphate + H(+). The enzyme catalyses dCTP + H2O = 2'-deoxycytidine + triphosphate + H(+). It carries out the reaction dGTP + H2O = 2'-deoxyguanosine + triphosphate + H(+). It catalyses the reaction dTTP + H2O = thymidine + triphosphate + H(+). Allosterically activated and regulated via the combined actions of GTP and dNTPs (dATP, dGTP, dTTP and dCTP): Allosteric site 1 binds GTP, while allosteric site 2 binds dNTP. Allosteric activation promotes the formation of highly active homotetramers. Functionally, protein that acts both as a host restriction factor involved in defense response to virus and as a regulator of DNA end resection at stalled replication forks. Has deoxynucleoside triphosphate (dNTPase) activity, which is required to restrict infection by viruses: dNTPase activity reduces cellular dNTP levels to levels too low for retroviral reverse transcription to occur, blocking early-stage virus replication in dendritic and other myeloid cells. Likewise, suppresses LINE-1 retrotransposon activity. In addition to virus restriction, dNTPase activity acts as a regulator of DNA precursor pools by regulating dNTP pools. Functions during S phase at stalled DNA replication forks to promote the resection of gapped or reversed forks: acts by stimulating the exonuclease activity of MRE11, activating the ATR-CHK1 pathway and allowing the forks to restart replication. Its ability to promote degradation of nascent DNA at stalled replication forks is required to prevent induction of type I interferons, thereby preventing chronic inflammation. Ability to promote DNA end resection at stalled replication forks is independent of dNTPase activity. Enhances immunoglobulin hypermutation in B-lymphocytes by promoting transversion mutation. The polypeptide is Deoxynucleoside triphosphate triphosphohydrolase SAMHD1 (Bos taurus (Bovine)).